The primary structure comprises 427 residues: Indole diterpene prenyltransferase ptmD (427 aa).

77 to 78 (YV) serves as a coordination point for L-tryptophan. Residues Arg-99, Lys-186, Tyr-188, Arg-259, Lys-261, Tyr-263, Tyr-344, Tyr-409, and Tyr-413 each coordinate substrate.

The protein belongs to the tryptophan dimethylallyltransferase family.

It functions in the pathway secondary metabolite biosynthesis. Its function is as follows. Indole diterpene prenyltransferase; part of the gene cluster that mediates the biosynthesis of the indole diterpenes penitrems. The geranylgeranyl diphosphate (GGPP) synthase ptmG catalyzes the first step in penitrem biosynthesis via conversion of farnesyl pyrophosphate and isopentyl pyrophosphate into geranylgeranyl pyrophosphate (GGPP). Condensation of indole-3-glycerol phosphate with GGPP by the prenyl transferase ptmC then forms 3-geranylgeranylindole (3-GGI). Epoxidation by the FAD-dependent monooxygenase ptmM leads to a epoxidized-GGI that is substrate of the terpene cyclase ptmB for cyclization to yield paspaline. Paspaline is subsequently converted to 13-desoxypaxilline by the cytochrome P450 monooxygenase ptmP, the latter being then converted to paxilline by the cytochrome P450 monooxygenase ptmQ. Paxilline is converted to beta-paxitriol via C-10 ketoreduction by the short-chain dehydrogenase ptmH which can be monoprenylated at the C-20 by the indole diterpene prenyltransferase ptmD. A two-step elimination (acetylation and elimination) process performed by the O-acetyltransferase ptmV and ptmI leads to the production of the prenylated form of penijanthine. The FAD-linked oxidoreductase ptmO then converts the prenylated form of penijanthine into PC-M5 which is in turn transformed into PC-M4 by the aromatic dimethylallyltransferase ptmE. Five sequential oxidative transformations performed by the cytochrome P450 monooxygenases ptmK, ptmU, ptmL, ptmN and ptmJ yield the various penitrem compounds. PtmK, ptmU and ptmM are involved in the formation of the key bicyclic ring of penitrem C via the formation of the intermediates secopenitrem D and penitrem D. PtmL catalyzes the epoxidation of penitrem D and C to yield penitrem B and F, respectively. PtmJ catalyzes the last benzylic hydroxylation to convert penitrem B to prenitrem E and penitrem F to penitrem A. This chain is Indole diterpene prenyltransferase ptmD, found in Penicillium ochrochloron.